The chain runs to 697 residues: MKFSLRWLQQIVDLNNIKFSTLVDKLSVSGFEVEDISRNSSNDDMIFDVTTTANRQDILCTVGLAREISSIFNRDLKYKLYKDSIAISTHCLNILNSVSLLDLSIVNVNYFYNNRSPLWLQYYLSSYNIKSLNLLTDIPQYIYLKWGQSIEIFDKNKISSVPIQYSLFNLQKKSHIIYDSPNIELEVLRYDDVILFPIGFSLNENIKCDAATNSIVIMGYVCDKQYITDIKKKLKLSTYLSQRCCNQGSRSDFLNAFYESVYLLGSFGFATLGKFYGYHKLYNISRILFIDKVKIQNILGSVKIGSYNYLTVKEIFTLLERLNFLPIYDSLKSSFKIHIPVYRQDDIVRPIDVIEEVARIYGFDNFISKLPLNPIDNKNIFLNNIFANKVYRIRYLLRCLGLHEAQNYSFYDYYPFNHDTQIKIYNPLAQDQSFLRSSLAVHLTLNQQDNLRQGNKDIEVFEIGKVFRLYSSSLEYDNTLNSFEFLHLSGLIANSIFLRPSWSDKEQSLSWFHAKGMVEEFLDRLEVPVVWKKISDLDQSNLFFNLMHLLNMNWTAIICNRFHEEIGIFGKLCNKSDFNSTYVFEFDLVKLIASIESLNHINSIINPYSSYPSLTRDISLTVKNSCTISFIKARILSYENNLIESIEVFNYYKDKSINAFYNVGLRIVYRAHNRTLNYSDINRIDQEIDDLLNEYKL.

The B5 domain occupies 283 to 368 (NISRILFIDK…RIYGFDNFIS (86 aa)). Mg(2+)-binding residues include Asp-346, Asp-352, Glu-355, and Glu-356. The FDX-ACB domain maps to 609–697 (SSYPSLTRDI…IDDLLNEYKL (89 aa)).

Belongs to the phenylalanyl-tRNA synthetase beta subunit family. Type 1 subfamily. In terms of assembly, tetramer of two alpha and two beta subunits. Mg(2+) is required as a cofactor.

It is found in the plastid. The protein resides in the chloroplast. It carries out the reaction tRNA(Phe) + L-phenylalanine + ATP = L-phenylalanyl-tRNA(Phe) + AMP + diphosphate + H(+). The polypeptide is Phenylalanine--tRNA ligase beta subunit, chloroplastic (Gracilaria tenuistipitata var. liui (Red alga)).